A 563-amino-acid polypeptide reads, in one-letter code: Arginine--tRNA ligase (563 aa).

A 'HIGH' region motif is present at residues 121–131 (PNIAKPFSIGH).

Belongs to the class-I aminoacyl-tRNA synthetase family. As to quaternary structure, monomer.

The protein resides in the cytoplasm. The enzyme catalyses tRNA(Arg) + L-arginine + ATP = L-arginyl-tRNA(Arg) + AMP + diphosphate. In Streptococcus pyogenes serotype M6 (strain ATCC BAA-946 / MGAS10394), this protein is Arginine--tRNA ligase.